The chain runs to 340 residues: 4-hydroxy-2-oxovalerate aldolase (340 aa).

In terms of domain architecture, Pyruvate carboxyltransferase spans Val8–Met260. A substrate-binding site is contributed by Arg16–Asp17. Residue Asp17 participates in Mn(2+) binding. Catalysis depends on His20, which acts as the Proton acceptor. The substrate site is built by Ser170 and His199. Positions 199 and 201 each coordinate Mn(2+). Tyr290 contacts substrate.

It belongs to the 4-hydroxy-2-oxovalerate aldolase family.

The catalysed reaction is (S)-4-hydroxy-2-oxopentanoate = acetaldehyde + pyruvate. This is 4-hydroxy-2-oxovalerate aldolase from Shewanella halifaxensis (strain HAW-EB4).